We begin with the raw amino-acid sequence, 271 residues long: MKYSMITLGAFAMMAVAQLSSLPACGQTCISNMLALAPTFGCTANDASCLCSDVNFAYGIRDCSNAACGAEAAGPVIAYGVEYCSSAGVGLSGSATGIDPGLGPATAVVASTPIATDGASAGSLSAITTSEFTSYVISGDSTVSTIVGSTTIYGPAAGSSSAITTSPIVSTVTSGDTSYPTTVGSTTIFGVAGVISTPTASASSALDSLSSSIASEASVITSSASAAVSSLSSRLSSAASPVSTTTSSAGGARQTAFAGLAAAAGFAAIIL.

The first 17 residues, 1–17 (MKYSMITLGAFAMMAVA), serve as a signal peptide directing secretion. In terms of domain architecture, CFEM spans 18–111 (QLSSLPACGQ…LGPATAVVAS (94 aa)). 4 disulfides stabilise this stretch: Cys25–Cys68, Cys29–Cys63, Cys42–Cys49, and Cys51–Cys84. Asp46 serves as a coordination point for heme. Ser247 is lipidated: GPI-anchor amidated serine. The propeptide at 248–271 (SAGGARQTAFAGLAAAAGFAAIIL) is removed in mature form.

The protein belongs to the RBT5 family.

The protein localises to the cell membrane. The protein resides in the secreted. It is found in the host nucleus. Its subcellular location is the host cell membrane. It localises to the host chloroplast envelope. Functionally, appears to function during host infection, and may play a role in suppressing the host immune response. The chain is Effector CFEM6 from Marssonina brunnea f. sp. multigermtubi (strain MB_m1) (Marssonina leaf spot fungus).